Here is a 469-residue protein sequence, read N- to C-terminus: Argininosuccinate lyase (469 aa).

The protein belongs to the lyase 1 family. Argininosuccinate lyase subfamily.

Its subcellular location is the cytoplasm. It catalyses the reaction 2-(N(omega)-L-arginino)succinate = fumarate + L-arginine. It participates in amino-acid biosynthesis; L-arginine biosynthesis; L-arginine from L-ornithine and carbamoyl phosphate: step 3/3. The chain is Argininosuccinate lyase from Burkholderia multivorans (strain ATCC 17616 / 249).